A 471-amino-acid chain; its full sequence is Tryptophanase (471 aa).

Residues Lys-5, Lys-115, and Lys-156 each carry the N6-acetyllysine modification. An N6-(pyridoxal phosphate)lysine modification is found at Lys-270. At Lys-450 the chain carries N6-acetyllysine.

It belongs to the beta-eliminating lyase family. Homotetramer. The cofactor is pyridoxal 5'-phosphate.

It catalyses the reaction L-tryptophan + H2O = indole + pyruvate + NH4(+). It functions in the pathway amino-acid degradation; L-tryptophan degradation via pyruvate pathway; indole and pyruvate from L-tryptophan: step 1/1. The protein is Tryptophanase of Escherichia coli O9:H4 (strain HS).